We begin with the raw amino-acid sequence, 178 residues long: Ribosome maturation factor RimM (178 aa).

The 81-residue stretch at 94-174 (KNEFFWFDLI…RIDVINSFDI (81 aa)) folds into the PRC barrel domain.

The protein belongs to the RimM family. Binds ribosomal protein uS19.

The protein resides in the cytoplasm. In terms of biological role, an accessory protein needed during the final step in the assembly of 30S ribosomal subunit, possibly for assembly of the head region. Essential for efficient processing of 16S rRNA. May be needed both before and after RbfA during the maturation of 16S rRNA. It has affinity for free ribosomal 30S subunits but not for 70S ribosomes. The protein is Ribosome maturation factor RimM of Aliarcobacter butzleri (strain RM4018) (Arcobacter butzleri).